A 463-amino-acid polypeptide reads, in one-letter code: Ribosomal protein uS12 methylthiotransferase RimO (463 aa).

The region spanning 15 to 130 is the MTTase N-terminal domain; the sequence is PKVGMVSLGC…VMQAVHSHLP (116 aa). Residues cysteine 24, cysteine 60, cysteine 89, cysteine 161, cysteine 165, and cysteine 168 each coordinate [4Fe-4S] cluster. In terms of domain architecture, Radical SAM core spans 147 to 392; the sequence is LTPRHYAYLK…MEVAEEVSAA (246 aa). The TRAM domain occupies 395-463; it reads ARKIGKTLKV…ADSHDLWGEV (69 aa).

Belongs to the methylthiotransferase family. RimO subfamily. The cofactor is [4Fe-4S] cluster.

The protein localises to the cytoplasm. The enzyme catalyses L-aspartate(89)-[ribosomal protein uS12]-hydrogen + (sulfur carrier)-SH + AH2 + 2 S-adenosyl-L-methionine = 3-methylsulfanyl-L-aspartate(89)-[ribosomal protein uS12]-hydrogen + (sulfur carrier)-H + 5'-deoxyadenosine + L-methionine + A + S-adenosyl-L-homocysteine + 2 H(+). Functionally, catalyzes the methylthiolation of an aspartic acid residue of ribosomal protein uS12. The chain is Ribosomal protein uS12 methylthiotransferase RimO from Burkholderia pseudomallei (strain 668).